Consider the following 373-residue polypeptide: Erythronate-4-phosphate dehydrogenase (373 aa).

Residues S45 and T66 each coordinate substrate. NAD(+) is bound by residues D146 and T173. The active site involves R206. Residue D230 participates in NAD(+) binding. E235 is a catalytic residue. Catalysis depends on H252, which acts as the Proton donor. G255 lines the NAD(+) pocket. Substrate is bound at residue Y256.

Belongs to the D-isomer specific 2-hydroxyacid dehydrogenase family. PdxB subfamily. In terms of assembly, homodimer.

The protein localises to the cytoplasm. The catalysed reaction is 4-phospho-D-erythronate + NAD(+) = (R)-3-hydroxy-2-oxo-4-phosphooxybutanoate + NADH + H(+). The protein operates within cofactor biosynthesis; pyridoxine 5'-phosphate biosynthesis; pyridoxine 5'-phosphate from D-erythrose 4-phosphate: step 2/5. In terms of biological role, catalyzes the oxidation of erythronate-4-phosphate to 3-hydroxy-2-oxo-4-phosphonooxybutanoate. The chain is Erythronate-4-phosphate dehydrogenase from Saccharophagus degradans (strain 2-40 / ATCC 43961 / DSM 17024).